Reading from the N-terminus, the 416-residue chain is tRNA(Met) cytidine acetate ligase (416 aa).

ATP contacts are provided by residues 7-20 (VVEY…HLHH), glycine 101, asparagine 162, and 187-188 (RI).

It belongs to the TmcAL family.

The protein resides in the cytoplasm. It catalyses the reaction cytidine(34) in elongator tRNA(Met) + acetate + ATP = N(4)-acetylcytidine(34) in elongator tRNA(Met) + AMP + diphosphate. Its function is as follows. Catalyzes the formation of N(4)-acetylcytidine (ac(4)C) at the wobble position of elongator tRNA(Met), using acetate and ATP as substrates. First activates an acetate ion to form acetyladenylate (Ac-AMP) and then transfers the acetyl group to tRNA to form ac(4)C34. In Halalkalibacterium halodurans (strain ATCC BAA-125 / DSM 18197 / FERM 7344 / JCM 9153 / C-125) (Bacillus halodurans), this protein is tRNA(Met) cytidine acetate ligase.